The chain runs to 394 residues: Monoterpene synthase FDS-5, chloroplastic (394 aa).

The transit peptide at 1–65 (MASFISLSSK…NLNSQFMQVY (65 aa)) directs the protein to the chloroplast. The isopentenyl diphosphate site is built by K100, R103, and Q138. 2 residues coordinate Mg(2+): D145 and D149. The DDXXD motif signature appears at 145–149 (DDMMD). A dimethylallyl diphosphate-binding site is contributed by R154. An isopentenyl diphosphate-binding site is contributed by R155. 4 residues coordinate dimethylallyl diphosphate: K242, Q281, K298, and K307.

This sequence belongs to the FPP/GGPP synthase family. Mg(2+) serves as cofactor. The cofactor is Mn(2+).

Its subcellular location is the plastid. The protein localises to the chloroplast. It carries out the reaction isopentenyl diphosphate + dimethylallyl diphosphate = (2E)-geranyl diphosphate + diphosphate. The enzyme catalyses 2 dimethylallyl diphosphate = (R,R)-chrysanthemyl diphosphate + diphosphate. The catalysed reaction is 2 dimethylallyl diphosphate = (R)-lavandulyl diphosphate + diphosphate. Condenses two molecules of dimethylallyl diphosphate (DMAPP) to produce mainly an irregular monoterpene, chrysanthemyl diphosphate (CPP) and lower amounts of a branched monoterpene, lavandulyl diphosphate (LPP). CPP is a precursor of the pyrethrin insecticides. When incubated with isopentenyl diphosphate (IPP) and DMAPP, catalyzes three competing isoprenoid condensation reactions, a chain elongation to give geranyl diphosphate (GPP), a cyclopropanation to give CPP and a branching to give LPP. This is Monoterpene synthase FDS-5, chloroplastic (FDS-5) from Artemisia spiciformis (Spiked big sagebrush).